A 65-amino-acid polypeptide reads, in one-letter code: Gallinacin-1 alpha (65 aa).

The N-terminal stretch at 1 to 19 (MRIVYLLLPFILLLAQGAA) is a signal peptide. The propeptide occupies 20–25 (GSSQAL). 3 disulfides stabilise this stretch: Cys-31/Cys-59, Cys-38/Cys-53, and Cys-43/Cys-60.

Belongs to the beta-defensin family.

It localises to the secreted. The protein resides in the cytoplasmic granule. In terms of biological role, has bactericidal activity. Potent activity against E.coli ML-35, L.monocytogenes EGD and C.albicans. This chain is Gallinacin-1 alpha, found in Gallus gallus (Chicken).